Here is a 100-residue protein sequence, read N- to C-terminus: Defensin-like protein 316 (100 aa).

The first 18 residues, 1-18 (MASHIICYIFCIIKLSCA), serve as a signal peptide directing secretion. 3 cysteine pairs are disulfide-bonded: Cys21–Cys84, Cys43–Cys64, and Cys53–Cys76.

This sequence belongs to the DEFL family.

It is found in the secreted. The sequence is that of Defensin-like protein 316 from Arabidopsis thaliana (Mouse-ear cress).